A 34-amino-acid polypeptide reads, in one-letter code: Cytochrome b6-f complex subunit 8 (34 aa).

The helical transmembrane segment at 3 to 23 (LLTFGWAALLAVFTFSLAMVV) threads the bilayer.

Belongs to the PetN family. As to quaternary structure, the 4 large subunits of the cytochrome b6-f complex are cytochrome b6, subunit IV (17 kDa polypeptide, PetD), cytochrome f and the Rieske protein, while the 4 small subunits are PetG, PetL, PetM and PetN. The complex functions as a dimer.

The protein resides in the cellular thylakoid membrane. In terms of biological role, component of the cytochrome b6-f complex, which mediates electron transfer between photosystem II (PSII) and photosystem I (PSI), cyclic electron flow around PSI, and state transitions. The protein is Cytochrome b6-f complex subunit 8 of Synechococcus elongatus (strain ATCC 33912 / PCC 7942 / FACHB-805) (Anacystis nidulans R2).